The sequence spans 347 residues: Spermidine/putrescine import ATP-binding protein PotA (347 aa).

The ABC transporter domain maps to 6 to 238 (LEIRNLSHYY…PKTKFVADFI (233 aa)). Residue 40–47 (GPSGCGKT) coordinates ATP.

This sequence belongs to the ABC transporter superfamily. Spermidine/putrescine importer (TC 3.A.1.11.1) family. In terms of assembly, the complex is composed of two ATP-binding proteins (PotA), two transmembrane proteins (PotB and PotC) and a solute-binding protein (PotD).

Its subcellular location is the cell inner membrane. It catalyses the reaction ATP + H2O + polyamine-[polyamine-binding protein]Side 1 = ADP + phosphate + polyamineSide 2 + [polyamine-binding protein]Side 1.. Part of the ABC transporter complex PotABCD involved in spermidine/putrescine import. Responsible for energy coupling to the transport system. The protein is Spermidine/putrescine import ATP-binding protein PotA of Borrelia garinii subsp. bavariensis (strain ATCC BAA-2496 / DSM 23469 / PBi) (Borreliella bavariensis).